The sequence spans 1508 residues: DNA-directed RNA polymerase subunit beta' (1508 aa).

Zn(2+)-binding residues include C71, C73, C86, and C89. Positions 470, 472, and 474 each coordinate Mg(2+). Residues C804, C878, C885, and C888 each contribute to the Zn(2+) site.

The protein belongs to the RNA polymerase beta' chain family. In terms of assembly, the RNAP catalytic core consists of 2 alpha, 1 beta, 1 beta' and 1 omega subunit. When a sigma factor is associated with the core the holoenzyme is formed, which can initiate transcription. The cofactor is Mg(2+). Requires Zn(2+) as cofactor.

It catalyses the reaction RNA(n) + a ribonucleoside 5'-triphosphate = RNA(n+1) + diphosphate. DNA-dependent RNA polymerase catalyzes the transcription of DNA into RNA using the four ribonucleoside triphosphates as substrates. In Campylobacter fetus subsp. fetus (strain 82-40), this protein is DNA-directed RNA polymerase subunit beta'.